The primary structure comprises 242 residues: MTSSFTDYCKFFNRILSEVQETQEQAIIKGAHLVSEAVMNGGRFYVFGSGHSHMIAEEIYNRAGGLALVTAILPPELMLHERPNKSTYLERIEGLSKSYLKLHQVTNKDVIMIISNSGRNTVPVEMAIESRNIGAKVIAMTSMKHSQKVTSRHKSGKKLYEYADVVLDNGAPVGDAGFQIANSEIYSGATSDSIGCFLAQALIVETLHLLVQQGFEPPVFKSSNVDGADLYNDKIFNEYVKW.

An SIS domain is found at 34-217 (VSEAVMNGGR…HLLVQQGFEP (184 aa)).

The protein belongs to the UPF0309 family.

This Halalkalibacterium halodurans (strain ATCC BAA-125 / DSM 18197 / FERM 7344 / JCM 9153 / C-125) (Bacillus halodurans) protein is UPF0309 protein BH3325.